Consider the following 82-residue polypeptide: Putative membrane protein insertion efficiency factor (82 aa).

Belongs to the UPF0161 family.

It is found in the cell membrane. In terms of biological role, could be involved in insertion of integral membrane proteins into the membrane. In Streptococcus uberis (strain ATCC BAA-854 / 0140J), this protein is Putative membrane protein insertion efficiency factor.